The following is a 433-amino-acid chain: tRNA(Ile2) 2-agmatinylcytidine synthetase TiaS (433 aa).

This sequence belongs to the TiaS family.

Its subcellular location is the cytoplasm. It carries out the reaction cytidine(34) in tRNA(Ile2) + agmatine + ATP + H2O = 2-agmatinylcytidine(34) in tRNA(Ile2) + AMP + 2 phosphate + 2 H(+). ATP-dependent agmatine transferase that catalyzes the formation of 2-agmatinylcytidine (agm2C) at the wobble position (C34) of tRNA(Ile2), converting the codon specificity from AUG to AUA. This is tRNA(Ile2) 2-agmatinylcytidine synthetase TiaS from Methanopyrus kandleri (strain AV19 / DSM 6324 / JCM 9639 / NBRC 100938).